We begin with the raw amino-acid sequence, 234 residues long: Octanoyltransferase (234 aa).

A BPL/LPL catalytic domain is found at 50-234 (GEAPELVWLL…AFEQVFGPTR (185 aa)). Residues 88–95 (RGGQITYH), 163–165 (AIG), and 176–178 (GIA) contribute to the substrate site. The active-site Acyl-thioester intermediate is the cysteine 194.

The protein belongs to the LipB family.

Its subcellular location is the cytoplasm. The catalysed reaction is octanoyl-[ACP] + L-lysyl-[protein] = N(6)-octanoyl-L-lysyl-[protein] + holo-[ACP] + H(+). The protein operates within protein modification; protein lipoylation via endogenous pathway; protein N(6)-(lipoyl)lysine from octanoyl-[acyl-carrier-protein]: step 1/2. Its function is as follows. Catalyzes the transfer of endogenously produced octanoic acid from octanoyl-acyl-carrier-protein onto the lipoyl domains of lipoate-dependent enzymes. Lipoyl-ACP can also act as a substrate although octanoyl-ACP is likely to be the physiological substrate. The sequence is that of Octanoyltransferase from Rhodopseudomonas palustris (strain BisA53).